The primary structure comprises 595 residues: Flap endonuclease 1 (595 aa).

Residues 1-106 (MGIKGLTKFI…SELEKRGEKR (106 aa)) form an N-domain region. D34 provides a ligand contact to Mg(2+). The DNA site is built by R47 and R72. D88, E160, E162, D181, and D183 together coordinate Mg(2+). An I-domain region spans residues 124–267 (EIKKQSGRTV…KTAYNLIKEY (144 aa)). A DNA-binding site is contributed by E160. The DNA site is built by G245 and D247. D247 contributes to the Mg(2+) binding site. The interaction with PCNA stretch occupies residues 350 to 358 (TQRRLDNFF). Residues 370-493 (NEESQIKKEV…TGDVYSFPNG (124 aa)) form a disordered region. Positions 392 to 401 (NDSSTKLNSK) are enriched in polar residues. Basic and acidic residues predominate over residues 406 to 425 (PKGEKESKTEKDDGDTHNGN). Over residues 426-436 (DNEEEGGEGET) the composition is skewed to acidic residues. A compositionally biased stretch (basic and acidic residues) spans 461-475 (HKSDSESGNVKKEST).

This sequence belongs to the XPG/RAD2 endonuclease family. FEN1 subfamily. Interacts with PCNA. Three molecules of FEN1 bind to one PCNA trimer with each molecule binding to one PCNA monomer. PCNA stimulates the nuclease activity without altering cleavage specificity. Mg(2+) serves as cofactor. In terms of processing, phosphorylated. Phosphorylation upon DNA damage induces relocalization to the nuclear plasma.

The protein localises to the nucleus. Its subcellular location is the nucleolus. The protein resides in the nucleoplasm. It is found in the mitochondrion. Its function is as follows. Structure-specific nuclease with 5'-flap endonuclease and 5'-3' exonuclease activities involved in DNA replication and repair. During DNA replication, cleaves the 5'-overhanging flap structure that is generated by displacement synthesis when DNA polymerase encounters the 5'-end of a downstream Okazaki fragment. It enters the flap from the 5'-end and then tracks to cleave the flap base, leaving a nick for ligation. Also involved in the long patch base excision repair (LP-BER) pathway, by cleaving within the apurinic/apyrimidinic (AP) site-terminated flap. Acts as a genome stabilization factor that prevents flaps from equilibrating into structures that lead to duplications and deletions. Also possesses 5'-3' exonuclease activity on nicked or gapped double-stranded DNA, and exhibits RNase H activity. Also involved in replication and repair of rDNA and in repairing mitochondrial DNA. This Plasmodium knowlesi (strain H) protein is Flap endonuclease 1.